Reading from the N-terminus, the 131-residue chain is Large ribosomal subunit protein bL17 (131 aa).

Belongs to the bacterial ribosomal protein bL17 family. In terms of assembly, part of the 50S ribosomal subunit. Contacts protein L32.

The polypeptide is Large ribosomal subunit protein bL17 (Paraburkholderia phymatum (strain DSM 17167 / CIP 108236 / LMG 21445 / STM815) (Burkholderia phymatum)).